The chain runs to 65 residues: Light-harvesting protein B800/830/1020 beta-2 chain (65 aa).

Residues 1–17 (TDIRTGLTDEECQEIHE) are Cytoplasmic-facing. A bacteriochlorophyll is bound by residues histidine 16 and asparagine 34. The helical transmembrane segment at 18–40 (MNMLGMHAYWSIGLIANALAYAW) threads the bilayer. Topologically, residues 41 to 65 (RPFHQGRAGNRLEDHAPDYVRSALT) are periplasmic.

The protein belongs to the antenna complex beta subunit family. As to quaternary structure, the core complex is formed by different alpha and beta chains, binding bacteriochlorophyll molecules, and arranged most probably in tetrameric structures disposed around the reaction center. The non-pigmented gamma chains may constitute additional components.

The protein resides in the cell inner membrane. In terms of biological role, antenna complexes are light-harvesting systems, which transfer the excitation energy to the reaction centers. This Halorhodospira halochloris (Ectothiorhodospira halochloris) protein is Light-harvesting protein B800/830/1020 beta-2 chain.